The primary structure comprises 297 residues: DNA processing protein DprA (297 aa).

The protein belongs to the DprA/Smf family. Interacts with RecA. Interacts with ComFA and ComFC.

The protein resides in the cytoplasm. In terms of biological role, protein that helps load RecA onto ssDNA during transformation. Binds cooperatively to circular ssDNA, is able to bridge different segments of DNA. Favors the loading of RecA onto SsbA- or SsbB-coated ssDNA and formation of RecA-DNA filaments. RecA-ATP cannot catalyze homologous DNA strand exchange; SsbA and DprA activate strand exchange by RecA-ATP. In Bacillus subtilis (strain 168), this protein is DNA processing protein DprA.